The following is a 241-amino-acid chain: Carboxy-S-adenosyl-L-methionine synthase (241 aa).

S-adenosyl-L-methionine-binding positions include Tyr-38, 63 to 65, 88 to 89, 116 to 117, Asn-131, and Arg-198; these read GCS, DN, and DI.

This sequence belongs to the class I-like SAM-binding methyltransferase superfamily. Cx-SAM synthase family. In terms of assembly, homodimer.

The enzyme catalyses prephenate + S-adenosyl-L-methionine = carboxy-S-adenosyl-L-methionine + 3-phenylpyruvate + H2O. Functionally, catalyzes the conversion of S-adenosyl-L-methionine (SAM) to carboxy-S-adenosyl-L-methionine (Cx-SAM). The protein is Carboxy-S-adenosyl-L-methionine synthase of Actinobacillus succinogenes (strain ATCC 55618 / DSM 22257 / CCUG 43843 / 130Z).